We begin with the raw amino-acid sequence, 157 residues long: Class I hydrophobin rodA (157 aa).

The N-terminal stretch at Met-1 to Lys-41 is a signal peptide. The N-linked (GlcNAc...) asparagine glycan is linked to Asn-47. Cystine bridges form between Cys-57–Cys-131, Cys-65–Cys-125, Cys-66–Cys-106, and Cys-132–Cys-150.

This sequence belongs to the fungal hydrophobin family. As to quaternary structure, self-assembles to form functional amyloid fibrils called rodlets. Self-assembly into fibrillar rodlets occurs spontaneously at hydrophobic:hydrophilic interfaces and the rodlets further associate laterally to form amphipathic monolayers.

It localises to the secreted. The protein resides in the spore wall. Aerial growth, conidiation, and dispersal of filamentous fungi in the environment rely upon a capability of their secreting small amphipathic proteins called hydrophobins (HPBs) with low sequence identity. Class I can self-assemble into an outermost layer of rodlet bundles on aerial cell surfaces, conferring cellular hydrophobicity that supports fungal growth, development and dispersal; whereas Class II form highly ordered films at water-air interfaces through intermolecular interactions but contribute nothing to the rodlet structure. RodA is a class I hydrophobin that contributes to surface hydrophobicity, which is important for processes such as association of hyphae in reproductive structures, dispersal of aerial spores and adhesion of pathogens to host structures. Important for the formation of hydrophobic rodlet layers of asexually-produced spores. Promotes also biofilm formation and may enhance lignocellulose utilization via promoting a compact substrate-enzyme-fungus structure. In Emericella nidulans (strain FGSC A4 / ATCC 38163 / CBS 112.46 / NRRL 194 / M139) (Aspergillus nidulans), this protein is Class I hydrophobin rodA.